Reading from the N-terminus, the 133-residue chain is Secretin (133 aa).

A signal peptide spans 1–22 (MEPPLPTPMLLLLLLLLSSSAA). Positions 23 to 30 (LPAPPRTP) are excised as a propeptide. Position 58 is a valine amide (Val-58). A Phosphoserine modification is found at Ser-62. Residues 62-133 (SEQDTENIPE…EWTETTRPPR (72 aa)) constitute a propeptide that is removed on maturation.

Belongs to the glucagon family. Highly expressed in the intestine. Also expressed in the hippocampus, cerebellum and the brain stem in adult mouse brain. In the hippocampus, expressed in the dentate gyrus, the hilus and the molecular layer.

The protein resides in the secreted. Functionally, hormone involved in different processes, such as regulation of the pH of the duodenal content, food intake and water homeostasis. Exerts its biological effects by binding to secretin receptor (SCTR), a G-protein coupled receptor expressed in the basolateral domain of several cells. Acts as a key gastrointestinal hormone by regulating the pH of the duodenal content. Secreted by S cells of the duodenum in the crypts of Lieberkuehn and regulates the pH of the duodenum by (1) inhibiting the secretion of gastric acid from the parietal cells of the stomach and (2) stimulating the production of bicarbonate (NaHCO(3)) from the ductal cells of the pancreas. Production of bicarbonate is essential to neutralize the pH and ensure no damage is done to the small intestine by the gastric acid. In addition to regulating the pH of the duodenal content, plays a central role in diet induced thermogenesis: acts as a non-sympathetic brown fat (BAT) activator mediating prandial thermogenesis, which consequentially induces satiation. Mechanistically, secretin released by the gut after a meal binds to secretin receptor (SCTR) in brown adipocytes, activating brown fat thermogenesis by stimulating lipolysis, which is sensed in the brain and promotes satiation. Also able to stimulate lipolysis in white adipocytes. Also plays an important role in cellular osmoregulation: released into the systemic circulation in response to hyperosmolality and acts at different levels in the hypothalamus, pituitary and kidney to regulate water homeostasis. Also plays a role in the central nervous system, possibly by acting as a neuropeptide hormone: required for hippocampal synaptic function and neural progenitor cells maintenance. This is Secretin from Mus musculus (Mouse).